The chain runs to 142 residues: Galactose-binding lectin l-1 (142 aa).

The region spanning 3–134 is the Galectin domain; sequence FVEVKNLIMK…DATVKNISVN (132 aa). Residue 68-74 coordinates a beta-D-galactoside; sequence WQEEQRD. Asn130 is a glycosylation site (N-linked (GlcNAc...) asparagine).

Homodimer. The N-terminus is blocked. As to expression, skin; highest expression in that of individuals showing resistance to infectious disease.

The protein localises to the secreted. Functionally, involved in host defense at the body surface. Causes agglutination of the Gram-positive bacterium S.difficile. Possesses calcium-independent hemagglutinating activity. This Anguilla japonica (Japanese eel) protein is Galactose-binding lectin l-1.